The sequence spans 468 residues: WD repeat-containing protein 55 homolog (468 aa).

Positions 1–107 are disordered; that stretch reads MRNFNSPKFG…VPKRVIDDYD (107 aa). Composition is skewed to acidic residues over residues 15–26, 41–58, and 67–91; these read DDSDDDDFDSGT, PITE…EYNP, and SDDE…DGED. WD repeat units lie at residues 134 to 173, 178 to 217, 221 to 259, 262 to 301, 304 to 343, and 388 to 427; these read KTED…CTIV, THTK…LKRF, AHEE…PVFK, EVED…MYVQ, PYEE…YHCD, and QHSL…EFDD.

This sequence belongs to the WD repeat WDR55 family.

This is WD repeat-containing protein 55 homolog from Aedes aegypti (Yellowfever mosquito).